We begin with the raw amino-acid sequence, 393 residues long: Major outer membrane porin, serovar D (393 aa).

The first 22 residues, 1-22 (MKKLLKSVLVFAALSSASSLQA), serve as a signal peptide directing secretion.

The protein belongs to the chlamydial porin (CP) (TC 1.B.2) family. In terms of assembly, part of a disulfide cross-linked outer membrane complex (COMC) composed of the major outer membrane porin (MOMP), the small cysteine-rich protein (OmcA) and the large cysteine-rich periplasmic protein (OmcB).

It is found in the cell outer membrane. In elementary bodies (EBs, the infectious stage, which is able to survive outside the host cell) provides the structural integrity of the outer envelope through disulfide cross-links with the small cysteine-rich protein and the large cysteine-rich periplasmic protein. It has been described in publications as the Sarkosyl-insoluble COMC (Chlamydia outer membrane complex), and serves as the functional equivalent of peptidoglycan. In terms of biological role, permits diffusion of specific solutes through the outer membrane. The sequence is that of Major outer membrane porin, serovar D (ompA) from Chlamydia trachomatis serovar D (strain ATCC VR-885 / DSM 19411 / UW-3/Cx).